A 534-amino-acid chain; its full sequence is CTP synthase (534 aa).

The tract at residues 1–267 is amidoligase domain; it reads MTKYIFVTGG…DQIVCDHLKL (267 aa). A CTP-binding site is contributed by S13. S13 contributes to the UTP binding site. 14–19 lines the ATP pocket; it reads SIGKGI. Y54 contacts L-glutamine. D71 serves as a coordination point for ATP. Mg(2+) contacts are provided by D71 and E141. Residues 148–150, 188–193, and K224 contribute to the CTP site; these read DIE and KTKPTQ. UTP is bound by residues 188-193 and K224; that span reads KTKPTQ. 240–242 provides a ligand contact to ATP; it reads RNV. The 243-residue stretch at 292-534 folds into the Glutamine amidotransferase type-1 domain; the sequence is KIALVGKYVE…FVTAAIKNSN (243 aa). Residue G354 coordinates L-glutamine. C381 functions as the Nucleophile; for glutamine hydrolysis in the catalytic mechanism. L-glutamine is bound by residues 382 to 385, E405, and R463; that span reads LGMQ. Residues H508 and E510 contribute to the active site.

Belongs to the CTP synthase family. In terms of assembly, homotetramer.

It carries out the reaction UTP + L-glutamine + ATP + H2O = CTP + L-glutamate + ADP + phosphate + 2 H(+). It catalyses the reaction L-glutamine + H2O = L-glutamate + NH4(+). The enzyme catalyses UTP + NH4(+) + ATP = CTP + ADP + phosphate + 2 H(+). Its pathway is pyrimidine metabolism; CTP biosynthesis via de novo pathway; CTP from UDP: step 2/2. With respect to regulation, allosterically activated by GTP, when glutamine is the substrate; GTP has no effect on the reaction when ammonia is the substrate. The allosteric effector GTP functions by stabilizing the protein conformation that binds the tetrahedral intermediate(s) formed during glutamine hydrolysis. Inhibited by the product CTP, via allosteric rather than competitive inhibition. Its function is as follows. Catalyzes the ATP-dependent amination of UTP to CTP with either L-glutamine or ammonia as the source of nitrogen. Regulates intracellular CTP levels through interactions with the four ribonucleotide triphosphates. The sequence is that of CTP synthase from Streptococcus pyogenes serotype M28 (strain MGAS6180).